A 327-amino-acid chain; its full sequence is tRNA uridine(34) hydroxylase (327 aa).

The region spanning 130 to 224 (LDEDTVVLDT…YGKDPEVQGE (95 aa)) is the Rhodanese domain. Catalysis depends on cysteine 184, which acts as the Cysteine persulfide intermediate.

It belongs to the TrhO family.

It catalyses the reaction uridine(34) in tRNA + AH2 + O2 = 5-hydroxyuridine(34) in tRNA + A + H2O. Catalyzes oxygen-dependent 5-hydroxyuridine (ho5U) modification at position 34 in tRNAs. The chain is tRNA uridine(34) hydroxylase from Streptococcus thermophilus (strain ATCC BAA-491 / LMD-9).